Consider the following 460-residue polypeptide: Probable amino acid transporter skat-1 (460 aa).

Helical transmembrane passes span L64–G84, F132–I152, M172–M192, I194–M214, T236–I256, F270–F290, V316–Y336, G362–E382, I383–F403, and I426–T446.

This sequence belongs to the amino acid/polyamine transporter 2 family. As to expression, expressed in the head, tail, body and ventral nerve cord neurons, muscles of the vulva, and intestine.

It is found in the membrane. The protein resides in the cytoplasmic granule. Its function is as follows. Plays a role in the accumulation of vital dyes and endogenous fluorescent compounds in lysosome related organelles. Has an effect on lysosome related organelle (LRO) function, in a pathway with serotonin. In Caenorhabditis elegans, this protein is Probable amino acid transporter skat-1.